A 182-amino-acid polypeptide reads, in one-letter code: uncharacterized protein (182 aa).

Residues 66 to 133 (QKRKRREIKV…NLEIETNSDS (68 aa)) adopt a coiled-coil conformation.

This is an uncharacterized protein from Acanthamoeba polyphaga (Amoeba).